Consider the following 344-residue polypeptide: N-acetyl-gamma-glutamyl-phosphate reductase (344 aa).

Residue cysteine 150 is part of the active site.

This sequence belongs to the NAGSA dehydrogenase family. Type 1 subfamily.

Its subcellular location is the cytoplasm. It carries out the reaction N-acetyl-L-glutamate 5-semialdehyde + phosphate + NADP(+) = N-acetyl-L-glutamyl 5-phosphate + NADPH + H(+). The protein operates within amino-acid biosynthesis; L-arginine biosynthesis; N(2)-acetyl-L-ornithine from L-glutamate: step 3/4. Catalyzes the NADPH-dependent reduction of N-acetyl-5-glutamyl phosphate to yield N-acetyl-L-glutamate 5-semialdehyde. The protein is N-acetyl-gamma-glutamyl-phosphate reductase of Pseudomonas putida (strain W619).